Consider the following 320-residue polypeptide: Transcription factor NAI1 (320 aa).

A disordered region spans residues 53–105 (TKQMKTNNNMNSTSSSPSSSSSSGSRTSQVISFGSPDTKTNPVETSLNFSNQV). The span at 58 to 80 (TNNNMNSTSSSPSSSSSSGSRTS) shows a compositional bias: low complexity. A compositionally biased stretch (polar residues) spans 81-105 (QVISFGSPDTKTNPVETSLNFSNQV). The 50-residue stretch at 128-177 (HLLKEHVLAERKRRQKLNERLIALSALLPGLKKTDKATVLEDAIKHLKQL) folds into the bHLH domain.

Homodimer. Expressed constitutively in roots, leaves, stems, and flowers.

Its subcellular location is the nucleus. Functionally, transcription activator that regulates the expression of at least NAI2, PYK10 and PBP1. Required for and mediates the formation of endoplasmic reticulum bodies (ER bodies). Involved in the symbiotic interactions with the endophytes of the Sebacinaceae fungus family, such as Piriformospora indica and Sebacina. This Arabidopsis thaliana (Mouse-ear cress) protein is Transcription factor NAI1 (NAI1).